Reading from the N-terminus, the 61-residue chain is Large ribosomal subunit protein uL30 (61 aa).

This sequence belongs to the universal ribosomal protein uL30 family. Part of the 50S ribosomal subunit.

The polypeptide is Large ribosomal subunit protein uL30 (Treponema denticola (strain ATCC 35405 / DSM 14222 / CIP 103919 / JCM 8153 / KCTC 15104)).